We begin with the raw amino-acid sequence, 165 residues long: Pyruvoyl-dependent arginine decarboxylase (165 aa).

Serine 53 carries the pyruvic acid (Ser) modification.

It belongs to the PdaD family. The cofactor is pyruvate.

It carries out the reaction L-arginine + H(+) = agmatine + CO2. This is Pyruvoyl-dependent arginine decarboxylase from Methanococcus aeolicus (strain ATCC BAA-1280 / DSM 17508 / OCM 812 / Nankai-3).